The sequence spans 276 residues: MPVKGFKPYSPGRRQMTVSTFEEITKTTPERSLLAPLKSKAGRNNQGKLTVRHQGGGHKRKYRLIDFKRNKDSVPAKVASIEYDPNRSANIALLHYLDGHKAYILAPNGLQVGQMVVSGPDADIKVGNALPIKNIPVGTLLHNIEMKPGKGAQLVRSAGGSAQLMAKEGKYATLRLPSGEMRMVHIDCRATIGQVGNLEHENINIGKAGRSRWLGIRPTVRGAVMNPNDHPHGGGEGRNPIGRNPVTPWGKPALGAKTRKKKHPSNRFIVKRRGKK.

The disordered stretch occupies residues 225–276 (MNPNDHPHGGGEGRNPIGRNPVTPWGKPALGAKTRKKKHPSNRFIVKRRGKK). A compositionally biased stretch (basic residues) spans 257–276 (KTRKKKHPSNRFIVKRRGKK).

The protein belongs to the universal ribosomal protein uL2 family. In terms of assembly, part of the 50S ribosomal subunit. Forms a bridge to the 30S subunit in the 70S ribosome.

Functionally, one of the primary rRNA binding proteins. Required for association of the 30S and 50S subunits to form the 70S ribosome, for tRNA binding and peptide bond formation. It has been suggested to have peptidyltransferase activity; this is somewhat controversial. Makes several contacts with the 16S rRNA in the 70S ribosome. The chain is Large ribosomal subunit protein uL2 from Desulfitobacterium hafniense (strain Y51).